The following is a 205-amino-acid chain: Shieldin complex subunit 1 (205 aa).

Component of the shieldin complex, consisting of SHLD1, SHLD2, SHLD3 and MAD2L2/REV7. Within the complex, SHLD2 forms a scaffold which interacts with a SHLD3-MAD2L2 subcomplex via its N-terminus, and with SHLD1 via its C-terminus. Interacts with ASTE1.

It is found in the chromosome. Its function is as follows. Component of the shieldin complex, which plays an important role in repair of DNA double-stranded breaks (DSBs). During G1 and S phase of the cell cycle, the complex functions downstream of TP53BP1 to promote non-homologous end joining (NHEJ) and suppress DNA end resection. Mediates various NHEJ-dependent processes including immunoglobulin class-switch recombination, and fusion of unprotected telomeres. This Homo sapiens (Human) protein is Shieldin complex subunit 1.